The chain runs to 418 residues: MSASTMKEVVYWSPKKVADWLLENAMPEYCEPLEHFTGRDLINLTQEDFTKPPLCRVSSDNGQRLLDMIETLKMEHHMEAHKNGHANGHLSIGTDVPAPDGSFSIKVKPNGMPNGYRKEMIKIPMPEPERSQYPMEWGKTFLAFLYALSCFVLTTVMISVVHERVPPKEVQPPLPDTFFDHFNRVQWAFSICEINGMILVGLWLIQWLLLKYKSIISRRFFCIVGTLYLYRCITMYVTTLPVPGMHFNCSPKLFGDWEAQLRRIMKLIAGGGLSITGSHNMCGDYLYSGHTVMLTLTYLFIKEYSPRRLWWYHWICWLLSVVGIFCILLAHDHYTVDVVVAYYITTRLFWWYHTMANQQVLKEASQMNLLARVWWYRPFQYFEKNVQGIVPRSYHWPFPWPVVHLGRQVKYSRLVNDT.

Residues 12–75 (WSPKKVADWL…LDMIETLKME (64 aa)) form the SAM domain. Ser-13 bears the Phosphoserine mark. 5 consecutive transmembrane segments (helical) span residues 141–161 (FLAF…ISVV), 189–209 (FSIC…QWLL), 220–240 (FFCI…VTTL), 281–301 (MCGD…YLFI), and 309–329 (LWWY…CILL). Residue His-290 is part of the active site. Active-site residues include His-333 and Asp-337. The helical transmembrane segment at 335–352 (TVDVVVAYYITTRLFWWY) threads the bilayer.

Belongs to the sphingomyelin synthase family. In terms of tissue distribution, widely expressed. Highest expression in the cardiovascular system.

Its subcellular location is the golgi apparatus membrane. It carries out the reaction an N-acylsphing-4-enine + a 1,2-diacyl-sn-glycero-3-phosphocholine = a sphingomyelin + a 1,2-diacyl-sn-glycerol. It catalyses the reaction 1-(9Z-octadecenoyl)-2-acyl-sn-3-glycerol + a sphingomyelin = a 1-(9Z-octadecenoyl)-2-acyl-sn-glycero-3-phosphocholine + an N-acylsphing-4-enine. The catalysed reaction is N-hexadecanoylsphinganine + a 1,2-diacyl-sn-glycero-3-phosphocholine = N-hexadecanoyl-sphinganine-1-phosphocholine + a 1,2-diacyl-sn-glycerol. The enzyme catalyses N-hexadecanoyl-(4R)-hydroxysphinganine + a 1,2-diacyl-sn-glycero-3-phosphocholine = N-hexadecanoyl-(4R)-hydroxysphinganine-phosphocholine + a 1,2-diacyl-sn-glycerol. It carries out the reaction an N-acylsphing-4-enine + a 1,2-diacyl-sn-glycero-3-phosphoethanolamine = an N-acylsphing-4-enine 1-phosphoethanolamine + a 1,2-diacyl-sn-glycerol. It participates in sphingolipid metabolism. Its function is as follows. Major sphingomyelin synthase at the Golgi apparatus. Catalyzes the reversible transfer of phosphocholine moiety in sphingomyelin biosynthesis: in the forward reaction transfers phosphocholine head group of phosphatidylcholine (PC) on to ceramide (CER) to form ceramide phosphocholine (sphingomyelin, SM) and diacylglycerol (DAG) as by-product, and in the reverse reaction transfers phosphocholine from SM to DAG to form PC and CER. The direction of the reaction depends on the levels of CER and DAG in Golgi membranes. Converts the newly synthesized CER, that is transported from the endoplasmic reticulum to the trans-Golgi by the Cer transport protein (CERT), to SM. Can form a heteromeric complex with glucosylceramide synthase (GCS) increasing SMS activity and reducing glucosylceramide synthesis, a critical mechanism that controls the metabolic fate of CER in the Golgi. Does not use free phosphorylcholine or CDP-choline as donor. Can also transfer phosphoethanolamine head group of phosphatidylethanolamine (PE) on to CER to form ceramide phosphoethanolamine (CPE). Regulates receptor-mediated signal transduction via mitogenic DAG and proapoptotic CER, as well as via SM, a structural component of membrane rafts that serve as platforms for signal transduction and protein sorting. Plays a role in secretory transport via regulation of DAG pool at the Golgi apparatus and its downstream effects on PRKD1. The polypeptide is Phosphatidylcholine:ceramide cholinephosphotransferase 1 (SGMS1) (Sus scrofa (Pig)).